The sequence spans 439 residues: Tryptophan synthase beta chain 2 (439 aa).

Lys99 carries the N6-(pyridoxal phosphate)lysine modification.

It belongs to the TrpB family. In terms of assembly, tetramer of two alpha and two beta chains. Requires pyridoxal 5'-phosphate as cofactor.

The catalysed reaction is (1S,2R)-1-C-(indol-3-yl)glycerol 3-phosphate + L-serine = D-glyceraldehyde 3-phosphate + L-tryptophan + H2O. It participates in amino-acid biosynthesis; L-tryptophan biosynthesis; L-tryptophan from chorismate: step 5/5. In terms of biological role, the beta subunit is responsible for the synthesis of L-tryptophan from indole and L-serine. The protein is Tryptophan synthase beta chain 2 (trpB2) of Corynebacterium efficiens (strain DSM 44549 / YS-314 / AJ 12310 / JCM 11189 / NBRC 100395).